The chain runs to 186 residues: Translation initiation factor IF-3 (186 aa).

Residues 1–21 are disordered; that stretch reads MINRSSGKDRDRSRSGDKELR.

It belongs to the IF-3 family. As to quaternary structure, monomer.

It is found in the cytoplasm. In terms of biological role, IF-3 binds to the 30S ribosomal subunit and shifts the equilibrium between 70S ribosomes and their 50S and 30S subunits in favor of the free subunits, thus enhancing the availability of 30S subunits on which protein synthesis initiation begins. The sequence is that of Translation initiation factor IF-3 from Borrelia turicatae (strain 91E135).